We begin with the raw amino-acid sequence, 293 residues long: Formamidopyrimidine-DNA glycosylase (293 aa).

The active-site Schiff-base intermediate with DNA is proline 2. Glutamate 3 (proton donor) is an active-site residue. Lysine 58 functions as the Proton donor; for beta-elimination activity in the catalytic mechanism. DNA contacts are provided by histidine 104, arginine 123, and lysine 166. Residues 257–293 (QVYDREGEPCRTDGCEGVVKRFVQNGRSTFWCPKCQR) form an FPG-type zinc finger. Residue arginine 283 is the Proton donor; for delta-elimination activity of the active site.

This sequence belongs to the FPG family. In terms of assembly, monomer. It depends on Zn(2+) as a cofactor.

The catalysed reaction is Hydrolysis of DNA containing ring-opened 7-methylguanine residues, releasing 2,6-diamino-4-hydroxy-5-(N-methyl)formamidopyrimidine.. It carries out the reaction 2'-deoxyribonucleotide-(2'-deoxyribose 5'-phosphate)-2'-deoxyribonucleotide-DNA = a 3'-end 2'-deoxyribonucleotide-(2,3-dehydro-2,3-deoxyribose 5'-phosphate)-DNA + a 5'-end 5'-phospho-2'-deoxyribonucleoside-DNA + H(+). In terms of biological role, involved in base excision repair of DNA damaged by oxidation or by mutagenic agents. Acts as a DNA glycosylase that recognizes and removes damaged bases. Has a preference for oxidized purines, such as 7,8-dihydro-8-oxoguanine (8-oxoG). Has AP (apurinic/apyrimidinic) lyase activity and introduces nicks in the DNA strand. Cleaves the DNA backbone by beta-delta elimination to generate a single-strand break at the site of the removed base with both 3'- and 5'-phosphates. This Bradyrhizobium sp. (strain ORS 278) protein is Formamidopyrimidine-DNA glycosylase.